Reading from the N-terminus, the 743-residue chain is 1,4-alpha-glucan branching enzyme GlgB (743 aa).

D416 acts as the Nucleophile in catalysis. The active-site Proton donor is the E469.

This sequence belongs to the glycosyl hydrolase 13 family. GlgB subfamily. In terms of assembly, monomer.

The catalysed reaction is Transfers a segment of a (1-&gt;4)-alpha-D-glucan chain to a primary hydroxy group in a similar glucan chain.. It functions in the pathway glycan biosynthesis; glycogen biosynthesis. Its function is as follows. Catalyzes the formation of the alpha-1,6-glucosidic linkages in glycogen by scission of a 1,4-alpha-linked oligosaccharide from growing alpha-1,4-glucan chains and the subsequent attachment of the oligosaccharide to the alpha-1,6 position. The protein is 1,4-alpha-glucan branching enzyme GlgB of Shewanella baltica (strain OS195).